The following is an 860-amino-acid chain: Pentatricopeptide repeat-containing protein At1g18900 (860 aa).

PPR repeat units follow at residues 363-397, 398-432, 433-467, 468-502, 503-537, 538-572, 573-607, and 608-642; these read DGHTYTTMVGNLGRAKQFGAINKLLDEMVRDGCQP, NTVTYNRLIHSYGRANYLNEAMNVFNQMQEAGCKP, DRVTYCTLIDIHAKAGFLDIAMDMYQRMQAGGLSP, DTFTYSVIINCLGKAGHLPAAHKLFCEMVDQGCTP, NLVTYNIMMDLHAKARNYQNALKLYRDMQNAGFEP, DKVTYSIVMEVLGHCGYLEEAEAVFTEMQQKNWIP, DEPVYGLLVDLWGKAGNVEKAWQWYQAMLHAGLRP, and NVPTCNSLLSTFLRVNKIAEAYELLQNMLALGLRP. In terms of domain architecture, Smr spans 760-843; it reads INLHVMSEGT…NSGCFVGSGE (84 aa).

The protein belongs to the PPR family. P subfamily.

In Arabidopsis thaliana (Mouse-ear cress), this protein is Pentatricopeptide repeat-containing protein At1g18900.